A 137-amino-acid polypeptide reads, in one-letter code: BolA-like protein 1 (137 aa).

The residue at position 81 (Ser81) is a Phosphoserine. Residues 114 to 137 are disordered; the sequence is WRENSQLDTSPPCLGGNKKTLGTP.

This sequence belongs to the BolA/IbaG family. As to quaternary structure, interacts with GLRX5. As to expression, widely expressed.

The protein resides in the mitochondrion. Its function is as follows. Acts as a mitochondrial iron-sulfur (Fe-S) cluster assembly factor that facilitates (Fe-S) cluster insertion into a subset of mitochondrial proteins. Probably acts together with the monothiol glutaredoxin GLRX5. May protect cells against oxidative stress. The protein is BolA-like protein 1 of Homo sapiens (Human).